We begin with the raw amino-acid sequence, 115 residues long: MDAKKMFVALVLIATFALPSLATFEKDFITPETIQAILKKSAPLSNIMLEEDVINALLKSKTVISNPIIEEAFLKNSNGLNGIPCGESCVWIPCISAAIGCSCKSKVCYRNSLDN.

An N-terminal signal peptide occupies residues 1 to 22; the sequence is MDAKKMFVALVLIATFALPSLA. The propeptide occupies 23–81; that stretch reads TFEKDFITPETIQAILKKSAPLSNIMLEEDVINALLKSKTVISNPIIEEAFLKNSNGLN. Positions 82–111 form a cross-link, cyclopeptide (Gly-Asn); the sequence is GIPCGESCVWIPCISAAIGCSCKSKVCYRN. 3 disulfide bridges follow: cysteine 85–cysteine 101, cysteine 89–cysteine 103, and cysteine 94–cysteine 108. A propeptide spanning residues 112–115 is cleaved from the precursor; that stretch reads SLDN.

Post-translationally, cycloviolacin-O13 is a cyclic peptide. As to expression, expressed in leaves, petals, petioles, roots and runners (at protein level).

Probably participates in a plant defense mechanism. Has hemolytic activity. This chain is Cycloviolacin-O13, found in Viola odorata (Sweet violet).